The following is a 423-amino-acid chain: Zinc finger protein Gfi-1 (423 aa).

The tract at residues 1 to 20 is SNAG domain; sequence MPRSFLVKSKKAHSYHQPRS. The tract at residues 1 to 76 is disordered; it reads MPRSFLVKSK…DRASASPNSC (76 aa). Residues serine 20 and serine 57 each carry the phosphoserine modification. Residues 48–57 show a composition bias toward basic and acidic residues; it reads SKMEPRERLS. Residues 141–258 form a required for interaction with RELA region; it reads RQCSALERSA…LLLGGGSYKC (118 aa). C2H2-type zinc fingers lie at residues 256 to 279, 285 to 307, 313 to 335, 341 to 363, 369 to 391, and 397 to 420; these read YKCI…RRSH, FACE…KAVH, FDCK…LLIH, YPCQ…TFIH, HKCQ…SRKH, and FGCD…ETQH.

In terms of assembly, interacts (via the zinc-finger domain) with ARIH2; the interaction prevents GFI1 ubiquitination and proteasomal degradation. Forms a complex with EHMT2 and HDAC1 to promote 'Lys-9' dimethylation of H3 (H3K9Me2) and repress expression of target genes. Interacts directly with EHMT2. Interacts with RUNX1T1; the interaction represses HDAC-mediated transcriptional activity. Interacts (via the C-terminal zinc fingers) with ZBTB17; the interaction results in the recruitment of GFI1 to the CDKN1A/p21 and CDKNIB promoters and repression of transcription. Interacts with U2AF1L4. Component of RCOR-GFI-KDM1A-HDAC complexes. Interacts directly with RCOR1, KDM1A and HDAC2. Also interacts with HDAC1. Component of the GFI1-AJUBA-HDAC1 repressor complex. Interacts directly with AJUBA (via its LIM domains); the interaction results in the HDAC-dependent corepression of a subset of GFI1 target genes and, occurs independently of the SNAG domain. Interacts with SPI1; the interaction inhibits SPI1 transcriptional activity targeted at macrophage-specific genes, repressing macrophage differentiation of myeloid progenitor cells and promoting granulocyte commitment. Interacts with PIAS3; the interaction relieves the inhibitory effect of PIAS3 on STAT3-mediated transcriptional activity. Interacts with RELA; the interaction occurs on liposaccharide (LPS) stimulation and controls RELA DNA binding activity and regulates endotoxin-mediated TOLL-like receptor inflammatory response. Ubiquitinated.

It is found in the nucleus. Transcription repressor essential for hematopoiesis. Functions in a cell-context and development-specific manner. Binds to 5'-TAAATCAC[AT]GCA-3' in the promoter region of a large number of genes. Component of several complexes, including the EHMT2-GFI1-HDAC1, AJUBA-GFI1-HDAC1 and RCOR-GFI-KDM1A-HDAC complexes, that suppress, via histone deacetylase (HDAC) recruitment, a number of genes implicated in multilineage blood cell development. Regulates neutrophil differentiation, promotes proliferation of lymphoid cells, and is required for granulocyte development. Inhibits SPI1 transcriptional activity at macrophage-specific genes, repressing macrophage differentiation of myeloid progenitor cells and promoting granulocyte commitment. Mediates, together with U2AF1L4, the alternative splicing of CD45 and controls T-cell receptor signaling. Regulates the endotoxin-mediated Toll-like receptor (TLR) inflammatory response by antagonizing RELA. Cooperates with CBFA2T2 to regulate ITGB1-dependent neurite growth. Controls cell-cycle progression by repressing CDKNIA/p21 transcription in response to TGFB1 via recruitment of GFI1 by ZBTB17 to the CDKNIA/p21 and CDKNIB promoters. Required for the maintenance of inner ear hair cells. In addition to its role in transcription, acts as a substrate adapter for PRMT1 in the DNA damage response. Facilitates the recognition of TP53BP1 and MRE11 substrates by PRMT1, promoting their methylation and the DNA damage response. This is Zinc finger protein Gfi-1 (Gfi1) from Mus musculus (Mouse).